We begin with the raw amino-acid sequence, 624 residues long: Probable potassium transport system protein Kup 1 (624 aa).

Transmembrane regions (helical) follow at residues 10–30 (LALG…LYAL), 48–68 (LSLI…MIIF), 94–114 (PVFY…GMLT), 133–153 (LYPY…SLQA), 159–179 (IGYL…ILGI), 210–230 (FLLG…ADIG), 242–262 (FFIA…NLIV), 270–290 (PFFM…ATVA), 331–351 (IYVP…CLAF), 363–383 (IAVN…AVSI), 388–408 (TFNV…FLGA), and 413–433 (FITG…IMYS).

The protein belongs to the HAK/KUP transporter (TC 2.A.72) family.

The protein localises to the cell inner membrane. The enzyme catalyses K(+)(in) + H(+)(in) = K(+)(out) + H(+)(out). Functionally, transport of potassium into the cell. Likely operates as a K(+):H(+) symporter. This is Probable potassium transport system protein Kup 1 from Legionella pneumophila (strain Paris).